A 252-amino-acid polypeptide reads, in one-letter code: Triosephosphate isomerase (252 aa).

Residue 9–11 (NWK) participates in substrate binding. His98 acts as the Electrophile in catalysis. Glu170 (proton acceptor) is an active-site residue. Residues Gly176 and Ser215 each contribute to the substrate site.

Belongs to the triosephosphate isomerase family. As to quaternary structure, homodimer.

It is found in the cytoplasm. The catalysed reaction is D-glyceraldehyde 3-phosphate = dihydroxyacetone phosphate. The protein operates within carbohydrate biosynthesis; gluconeogenesis. It functions in the pathway carbohydrate degradation; glycolysis; D-glyceraldehyde 3-phosphate from glycerone phosphate: step 1/1. Its function is as follows. Involved in the gluconeogenesis. Catalyzes stereospecifically the conversion of dihydroxyacetone phosphate (DHAP) to D-glyceraldehyde-3-phosphate (G3P). The protein is Triosephosphate isomerase of Buchnera aphidicola subsp. Baizongia pistaciae (strain Bp).